Here is a 264-residue protein sequence, read N- to C-terminus: 3-methyl-2-oxobutanoate hydroxymethyltransferase (264 aa).

Aspartate 45 and aspartate 84 together coordinate Mg(2+). 3-methyl-2-oxobutanoate contacts are provided by residues 45–46 (DS), aspartate 84, and lysine 112. Position 114 (glutamate 114) interacts with Mg(2+). Glutamate 181 serves as the catalytic Proton acceptor.

This sequence belongs to the PanB family. As to quaternary structure, homodecamer; pentamer of dimers. Mg(2+) serves as cofactor.

The protein resides in the cytoplasm. It carries out the reaction 3-methyl-2-oxobutanoate + (6R)-5,10-methylene-5,6,7,8-tetrahydrofolate + H2O = 2-dehydropantoate + (6S)-5,6,7,8-tetrahydrofolate. It functions in the pathway cofactor biosynthesis; (R)-pantothenate biosynthesis; (R)-pantoate from 3-methyl-2-oxobutanoate: step 1/2. Functionally, catalyzes the reversible reaction in which hydroxymethyl group from 5,10-methylenetetrahydrofolate is transferred onto alpha-ketoisovalerate to form ketopantoate. This Escherichia coli O127:H6 (strain E2348/69 / EPEC) protein is 3-methyl-2-oxobutanoate hydroxymethyltransferase.